Consider the following 457-residue polypeptide: Succinate-semialdehyde dehydrogenase [NADP(+)] (457 aa).

NADP(+) contacts are provided by residues 133 to 134 (WN), 157 to 160 (KHAS), and 209 to 210 (GS). Catalysis depends on E231, which acts as the Proton acceptor. Residue L232 participates in NADP(+) binding. The active-site Nucleophile is C265. E362 lines the NADP(+) pocket.

This sequence belongs to the aldehyde dehydrogenase family.

The enzyme catalyses succinate semialdehyde + NADP(+) + H2O = succinate + NADPH + 2 H(+). In terms of biological role, catalyzes the NADP(+)-dependent oxidation of succinate semialdehyde to succinate. It is believed to be the main source of succinate semialdehyde dehydrogenase activity in Mycobacterium. The sequence is that of Succinate-semialdehyde dehydrogenase [NADP(+)] (gabD1) from Mycobacterium leprae (strain TN).